A 403-amino-acid chain; its full sequence is Cell cycle checkpoint control protein RAD9B (403 aa).

A disordered region spans residues 285–347; that stretch reads PLSQARRSHP…ASAGQDDIFE (63 aa). Ser-354 and Ser-363 each carry phosphoserine.

This sequence belongs to the rad9 family. In terms of assembly, interacts with HUS1, HUS1B, RAD1, RAD9A and RAD17.

In Mus musculus (Mouse), this protein is Cell cycle checkpoint control protein RAD9B (Rad9b).